The sequence spans 833 residues: Leucine--tRNA ligase (833 aa).

A 'HIGH' region motif is present at residues 41-52 (PYPSGAGLHVGH). A 'KMSKS' region motif is present at residues 610–614 (KMSKS). Position 613 (Lys-613) interacts with ATP.

Belongs to the class-I aminoacyl-tRNA synthetase family.

The protein resides in the cytoplasm. The enzyme catalyses tRNA(Leu) + L-leucine + ATP = L-leucyl-tRNA(Leu) + AMP + diphosphate. The sequence is that of Leucine--tRNA ligase from Streptococcus mutans serotype c (strain ATCC 700610 / UA159).